Reading from the N-terminus, the 249-residue chain is UDP-N-acetyl-D-mannosaminuronic acid transferase (249 aa).

It belongs to the glycosyltransferase 26 family.

The enzyme catalyses UDP-N-acetyl-alpha-D-mannosaminouronate + N-acetyl-alpha-D-glucosaminyl-di-trans,octa-cis-undecaprenyl diphosphate = beta-D-ManNAcA-(1-&gt;4)-alpha-D-GlcNAc-di-trans,octa-cis-undecaprenyl diphosphate + UDP + H(+). Its pathway is bacterial outer membrane biogenesis; enterobacterial common antigen biosynthesis. Functionally, catalyzes the synthesis of Und-PP-GlcNAc-ManNAcA (Lipid II), the second lipid-linked intermediate involved in enterobacterial common antigen (ECA) synthesis. This is UDP-N-acetyl-D-mannosaminuronic acid transferase from Pectobacterium atrosepticum (strain SCRI 1043 / ATCC BAA-672) (Erwinia carotovora subsp. atroseptica).